Here is a 651-residue protein sequence, read N- to C-terminus: Protein transport protein SEC9 (651 aa).

3 disordered regions span residues 1-22 (MGLK…QNKD), 53-299 (AEDK…QAPM), and 313-332 (RNSE…DFEE). Residues Ser79 and Ser92 each carry the phosphoserine modification. A compositionally biased stretch (polar residues) spans 86–112 (NEATAGSNRGSSGTQDLGNGAESNSMQ). The segment covering 120–129 (DDYRYDDDPY) has biased composition (basic and acidic residues). Composition is skewed to polar residues over residues 157-218 (GTSL…SLDQ) and 244-284 (DSNT…ANPY). Residues Ser186, Ser190, Ser213, Ser271, and Ser273 each carry the phosphoserine modification. Low complexity predominate over residues 285–296 (SSRSVRQPQSQQ). Positions 313-327 (RNSEVDLNEEPRTGE) are enriched in basic and acidic residues. Phosphoserine is present on Ser315. Thr355 bears the Phosphothreonine mark. Ser359 carries the post-translational modification Phosphoserine. 2 t-SNARE coiled-coil homology domains span residues 434 to 496 (KFTK…VAEL) and 588 to 650 (DEME…LAGI).

This sequence belongs to the SNAP-25 family. As to quaternary structure, interacts with SRO7 and SRO77.

Component of a SNARE complex that may be the effector of SEC4 function in exocytosis. The protein is Protein transport protein SEC9 (SEC9) of Saccharomyces cerevisiae (strain ATCC 204508 / S288c) (Baker's yeast).